A 34-amino-acid chain; its full sequence is Voltage sensor toxin 3 (34 aa).

3 disulfides stabilise this stretch: Cys-2–Cys-17, Cys-9–Cys-22, and Cys-16–Cys-29.

This sequence belongs to the neurotoxin 10 (Hwtx-1) family. 61 (VSTX3) subfamily. In terms of tissue distribution, expressed by the venom gland.

Its subcellular location is the secreted. Potent voltage-gated sodium channel blocker (IC(50)=190 nM and 210 nM on human and rat Nav1.3/SCN3A respectively, 430 nM on human Nav1.7/SCN9A, 770 nM and 290 nM on human and rat Nav1.8/SCN10A, respectively). Binds the voltage-sensor domain of the potassium channel KvAP (from Aeropyrum pernix) and weakly inhibits this channel. This is Voltage sensor toxin 3 from Grammostola rosea (Chilean rose tarantula).